The primary structure comprises 375 residues: 2-oxoglutarate synthase subunit KorA (375 aa).

In terms of assembly, heterotetramer of the KorA, KorB, KorC and KorD subunits.

The enzyme catalyses 2 oxidized [2Fe-2S]-[ferredoxin] + 2-oxoglutarate + CoA = succinyl-CoA + 2 reduced [2Fe-2S]-[ferredoxin] + CO2 + H(+). The polypeptide is 2-oxoglutarate synthase subunit KorA (korA) (Methanothermobacter marburgensis (strain ATCC BAA-927 / DSM 2133 / JCM 14651 / NBRC 100331 / OCM 82 / Marburg) (Methanobacterium thermoautotrophicum)).